The sequence spans 1014 residues: Probable transport protein MmpL11 (1014 aa).

12 consecutive transmembrane segments (helical) span residues 13–33 (WLVFTGWLLALVPAIYLAMTQ), 156–173 (VRLYVIGQGALSAAVAAN), 188–208 (IILIVLLAVFGSLAAAAVPLA), 235–255 (TSTVSMFGIALAVDYSLFILM), 279–299 (GLAVVLSGMTVIASLTGIYLI), 311–331 (AILAVAIAMLASITLTPAALA), 373–393 (ASAASTILIIMATPVTSMMLG), 530–550 (TEPLMLVFVALIAFVMLLISI), 560–580 (VLMTLLSVAAAYGSLVMVFQW), 598–618 (VPPLVLAMTFGLSMDYEIFLL), 649–669 (AALIMIAVFVGFAFAGMPLVA), and 671–691 (IGVACAVAIAVDVTAVRLVLV). Residues 783 to 802 (SDRVLPGAATQESEEDPAMG) are disordered.

The protein belongs to the resistance-nodulation-cell division (RND) (TC 2.A.6) family. MmpL subfamily.

It is found in the cell membrane. This Mycobacterium leprae (strain TN) protein is Probable transport protein MmpL11 (mmpL11).